We begin with the raw amino-acid sequence, 328 residues long: 3,4-dihydroxyphenylacetaldehyde synthase 2 (328 aa).

N111 is a catalytic residue. Residue K222 is modified to N6-(pyridoxal phosphate)lysine.

It belongs to the group II decarboxylase family. Pyridoxal 5'-phosphate is required as a cofactor.

It carries out the reaction L-dopa + O2 + H2O + H(+) = 3,4-dihydroxyphenylacetaldehyde + H2O2 + NH4(+) + CO2. Its function is as follows. Catalyzes the decarboxylation-oxidative deamination of L-3,4-dihydroxyphenylalanine (L-DOPA) to 3,4-dihydroxylphenylacetaldehyde (DHPAA). Involved in cuticle development. Probably responsible for the protein cross-linking during the development of flexible cuticles. The sequence is that of 3,4-dihydroxyphenylacetaldehyde synthase 2 (amd) from Drosophila simulans (Fruit fly).